The chain runs to 307 residues: Recombination-associated protein RdgC (307 aa).

The protein belongs to the RdgC family.

The protein localises to the cytoplasm. It localises to the nucleoid. Functionally, may be involved in recombination. This chain is Recombination-associated protein RdgC, found in Burkholderia cenocepacia (strain ATCC BAA-245 / DSM 16553 / LMG 16656 / NCTC 13227 / J2315 / CF5610) (Burkholderia cepacia (strain J2315)).